Reading from the N-terminus, the 329-residue chain is Carbohydrate sulfotransferase chst-1 (329 aa).

The Cytoplasmic portion of the chain corresponds to 1-3; sequence MLK. Residues 4–23 traverse the membrane as a helical; Signal-anchor for type II membrane protein segment; the sequence is WFIISCCLLTAISYSTYYLF. Over 24–329 the chain is Lumenal; it reads TSNSWIKTVK…FDFDTTFINS (306 aa). Residues 91 to 97 and 157 to 165 contribute to the 3'-phosphoadenylyl sulfate site; these read KKSMSTL and RDPIARFIS.

This sequence belongs to the sulfotransferase 2 family. Highly expressed in the head and tail of hermaphrodites, in particular in amphid and phasmid sheath cells.

It is found in the golgi apparatus membrane. It carries out the reaction chondroitin beta-D-glucuronate + n 3'-phosphoadenylyl sulfate = chondroitin 4'-sulfate + n adenosine 3',5'-bisphosphate + n H(+). Functionally, catalyzes the transfer of sulfate to position 4 of non-reducing N-acetylgalactosamine (GalNAc) residue of chondroitin. The chain is Carbohydrate sulfotransferase chst-1 from Caenorhabditis elegans.